A 185-amino-acid chain; its full sequence is Signal peptidase complex subunit 3 (185 aa).

At 1-16 the chain is on the cytoplasmic side; it reads MHTSIQRIQQTFSQAS. A helical; Signal-anchor for type II membrane protein transmembrane segment spans residues 17 to 37; sequence TVLSIIAAIVFVVSYIQLVVA. The Lumenal segment spans residues 38–185; that stretch reads NVWSLPEANF…KGSIKFPQLV (148 aa). Residue Asn-151 is glycosylated (N-linked (GlcNAc...) asparagine).

It belongs to the SPCS3 family. Component of the signal peptidase complex (SPC) composed of a catalytic subunit SEC11 and three accessory subunits SPC1, SPC2 and SPC3. The complex induces a local thinning of the ER membrane which is used to measure the length of the signal peptide (SP) h-region of protein substrates. This ensures the selectivity of the complex towards h-regions shorter than 18-20 amino acids. SPC associates with the translocon complex.

The protein localises to the endoplasmic reticulum membrane. In terms of biological role, essential component of the signal peptidase complex (SPC) which catalyzes the cleavage of N-terminal signal sequences from nascent proteins as they are translocated into the lumen of the endoplasmic reticulum. Essential for the SPC catalytic activity, possibly by stabilizing and positioning the active center of the complex close to the lumenal surface. Essential for viability. The chain is Signal peptidase complex subunit 3 (SPC3) from Yarrowia lipolytica (strain CLIB 122 / E 150) (Yeast).